A 1152-amino-acid polypeptide reads, in one-letter code: Integrin alpha-M (1152 aa).

The N-terminal stretch at 1–16 (MALRVLLLTALTLCHG) is a signal peptide. Over 17 to 1104 (FNLDTENAMT…TKVEPFEVPN (1088 aa)) the chain is Extracellular. 2 FG-GAP repeats span residues 18-75 (NLDT…SCEP) and 76-135 (IRLQ…QQPQ). Cys-66 and Cys-73 are oxidised to a cystine. Residue Asn-86 is glycosylated (N-linked (GlcNAc...) asparagine). The cysteines at positions 105 and 123 are disulfide-linked. The VWFA domain occupies 150-328 (DIAFLIDGSG…EALKTIQNQL (179 aa)). N-linked (GlcNAc...) asparagine glycosylation occurs at Asn-240. 5 FG-GAP repeats span residues 339 to 390 (QTGS…STFI), 391 to 442 (NMTR…TGMW), 443 to 503 (ESNA…RARW), 506 to 564 (DAVL…SGIS), and 569 to 629 (QRIA…FNPR). N-linked (GlcNAc...) asparagine glycosylation occurs at Asn-391. Ca(2+) contacts are provided by Asp-465, Asp-467, Asn-469, Asp-473, Asp-529, Asn-531, Asp-533, Asp-537, Asp-592, Asp-596, and Asp-600. A glycan (N-linked (GlcNAc...) asparagine) is linked at Asn-469. Cys-654 and Cys-711 are oxidised to a cystine. N-linked (GlcNAc...) asparagine glycosylation is found at Asn-692, Asn-696, and Asn-734. Residues Cys-770 and Cys-776 are joined by a disulfide bond. Asn-801 carries N-linked (GlcNAc...) asparagine glycosylation. Cys-847 and Cys-864 are disulfide-bonded. 8 N-linked (GlcNAc...) asparagine glycosylation sites follow: Asn-880, Asn-900, Asn-911, Asn-940, Asn-946, Asn-978, Asn-993, and Asn-1021. Cystine bridges form between Cys-998/Cys-1022 and Cys-1027/Cys-1032. Residues Asn-1044, Asn-1050, and Asn-1075 are each glycosylated (N-linked (GlcNAc...) asparagine). Residues 1105–1128 (PLPLIVGSSVGGLLLLALITAALY) form a helical membrane-spanning segment. Residues 1129–1152 (KLGFFKRQYKDMMSEGGPPGAEPQ) lie on the Cytoplasmic side of the membrane. The GFFKR motif motif lies at 1131-1135 (GFFKR).

It belongs to the integrin alpha chain family. In terms of assembly, heterodimer of an alpha and a beta subunit. ITGAM associates with ITGB2. Found in a complex with CD177 and ITGB2/CD18. Interacts with JAM3. Interacts with THBD. Interacts with complement factor H/CFH; this interaction mediates adhesion of neutrophils to pathogens leading to pathogen clearance. Interacts with TMEM268; this interaction inhibits ITGAM degradation via the endosome-lysosome pathway. In terms of tissue distribution, predominantly expressed in monocytes and granulocytes. Expressed in neutrophils (at protein level).

The protein resides in the cell membrane. Its subcellular location is the membrane raft. Integrin ITGAM/ITGB2 is implicated in various adhesive interactions of monocytes, macrophages and granulocytes as well as in mediating the uptake of complement-coated particles and pathogens. It is identical with CR-3, the receptor for the iC3b fragment of the third complement component. It probably recognizes the R-G-D peptide in C3b. Integrin ITGAM/ITGB2 is also a receptor for fibrinogen, factor X and ICAM1. It recognizes P1 and P2 peptides of fibrinogen gamma chain. Regulates neutrophil migration. In association with beta subunit ITGB2/CD18, required for CD177-PRTN3-mediated activation of TNF primed neutrophils. May regulate phagocytosis-induced apoptosis in extravasated neutrophils. May play a role in mast cell development. Required with TYROBP/DAP12 in microglia to control production of microglial superoxide ions which promote the neuronal apoptosis that occurs during brain development. This chain is Integrin alpha-M (ITGAM), found in Homo sapiens (Human).